A 350-amino-acid chain; its full sequence is UDP-N-acetylenolpyruvoylglucosamine reductase (350 aa).

Residues 24–195 (HVEATARWLL…VAVEFNLPLL (172 aa)) form the FAD-binding PCMH-type domain. R172 is a catalytic residue. S245 (proton donor) is an active-site residue. Residue E342 is part of the active site.

This sequence belongs to the MurB family. It depends on FAD as a cofactor.

It localises to the cytoplasm. The catalysed reaction is UDP-N-acetyl-alpha-D-muramate + NADP(+) = UDP-N-acetyl-3-O-(1-carboxyvinyl)-alpha-D-glucosamine + NADPH + H(+). Its pathway is cell wall biogenesis; peptidoglycan biosynthesis. Cell wall formation. The polypeptide is UDP-N-acetylenolpyruvoylglucosamine reductase (Xanthomonas euvesicatoria pv. vesicatoria (strain 85-10) (Xanthomonas campestris pv. vesicatoria)).